The sequence spans 274 residues: 2,3,4,5-tetrahydropyridine-2,6-dicarboxylate N-succinyltransferase (274 aa).

2 residues coordinate substrate: Arg106 and Asp143.

Belongs to the transferase hexapeptide repeat family. In terms of assembly, homotrimer.

It is found in the cytoplasm. The catalysed reaction is (S)-2,3,4,5-tetrahydrodipicolinate + succinyl-CoA + H2O = (S)-2-succinylamino-6-oxoheptanedioate + CoA. Its pathway is amino-acid biosynthesis; L-lysine biosynthesis via DAP pathway; LL-2,6-diaminopimelate from (S)-tetrahydrodipicolinate (succinylase route): step 1/3. The protein is 2,3,4,5-tetrahydropyridine-2,6-dicarboxylate N-succinyltransferase of Rickettsia typhi (strain ATCC VR-144 / Wilmington).